The chain runs to 464 residues: D-2-hydroxyglutarate dehydrogenase (464 aa).

In terms of domain architecture, FAD-binding PCMH-type spans 37-216 (FAPAPSAIVF…VEATMRLERQ (180 aa)). (R)-2-hydroxyglutarate contacts are provided by Arg325, Ser329, and Lys339. 3 residues coordinate (R)-malate: Arg325, Ser329, and Lys339. Positions 374 and 381 each coordinate Zn(2+). Asn383 is a binding site for (R)-2-hydroxyglutarate. Glu420 provides a ligand contact to Zn(2+). His421 provides a ligand contact to (R)-2-hydroxyglutarate. His421 is a binding site for (R)-malate.

Belongs to the FAD-binding oxidoreductase/transferase type 4 family. As to quaternary structure, homodimer. FAD serves as cofactor.

It carries out the reaction (R)-2-hydroxyglutarate + A = 2-oxoglutarate + AH2. It catalyses the reaction (R)-malate + A = oxaloacetate + AH2. Its activity is regulated as follows. Activated by Zn(2+) ions at low concentrations (10 uM) and inhibited by Zn(2+), Fe(2+) and Ni(2+) at high concentrations (10 mM). Its function is as follows. Catalyzes the dehydrogenation of (R)-2-hydroxyglutarate (D-2-hydroxyglutarate or D-2-HG) to 2-oxoglutarate and of (R)-malate (D-malate) to oxaloacetate. Is functionally tied to L-serine biosynthesis, via its coupling with the D-3-phosphoglycerate dehydrogenase SerA, encoded by the adjacent gene in the locus. Is required for the utilization of D-2-hydroxyglutarate as well as D-malate as the sole carbon source for growth of P.stutzeri. Active in vitro with artificial electron acceptors such as 2,6-dichlorophenolindophenol (DCPIP) and appears to couple with electron transfer flavoprotein (ETF) for efficient oxidation of both D-2-hydroxyglutarate and D-malate in vivo. Cannot catalyze the oxidation of L-2-hydroxyglutarate, D-lactate, D-tartrate, D-2-hydroxybutanoate, D-mandelate, D-glycerate and D-phenyllactate. This chain is D-2-hydroxyglutarate dehydrogenase, found in Stutzerimonas stutzeri (strain A1501) (Pseudomonas stutzeri).